The following is a 489-amino-acid chain: UDP-N-acetylmuramoyl-L-alanyl-D-glutamate--2,6-diaminopimelate ligase (489 aa).

Residue S30 coordinates UDP-N-acetyl-alpha-D-muramoyl-L-alanyl-D-glutamate. Position 108 to 114 (108 to 114) interacts with ATP; it reads GTNGKTT. UDP-N-acetyl-alpha-D-muramoyl-L-alanyl-D-glutamate contacts are provided by residues N149, 150 to 151, S177, Q183, and R185; that span reads TT. K217 is subject to N6-carboxylysine. Meso-2,6-diaminopimelate is bound by residues R383, 407 to 410, G459, and E463; that span reads DNPR. The Meso-diaminopimelate recognition motif motif lies at 407–410; the sequence is DNPR.

The protein belongs to the MurCDEF family. MurE subfamily. Requires Mg(2+) as cofactor. Post-translationally, carboxylation is probably crucial for Mg(2+) binding and, consequently, for the gamma-phosphate positioning of ATP.

It is found in the cytoplasm. The catalysed reaction is UDP-N-acetyl-alpha-D-muramoyl-L-alanyl-D-glutamate + meso-2,6-diaminopimelate + ATP = UDP-N-acetyl-alpha-D-muramoyl-L-alanyl-gamma-D-glutamyl-meso-2,6-diaminopimelate + ADP + phosphate + H(+). It participates in cell wall biogenesis; peptidoglycan biosynthesis. In terms of biological role, catalyzes the addition of meso-diaminopimelic acid to the nucleotide precursor UDP-N-acetylmuramoyl-L-alanyl-D-glutamate (UMAG) in the biosynthesis of bacterial cell-wall peptidoglycan. In Geobacillus kaustophilus (strain HTA426), this protein is UDP-N-acetylmuramoyl-L-alanyl-D-glutamate--2,6-diaminopimelate ligase.